Consider the following 815-residue polypeptide: Probable disease resistance protein At5g66910 (815 aa).

An RPW8 domain is found at 1-150 (MVVVDWLGLG…NINKKLDRLS (150 aa)). NB-ARC domains follow at residues 156-283 (PLVS…DVWQ) and 341-440 (SPDE…DIWM). 196–203 (GPPGCGKT) lines the ATP pocket. LRR repeat units follow at residues 656–678 (NLQEIDIDYCYDLDELPYWIPEV), 680–702 (SLKTLSITNCNKLSQLPEAIGNL), 704–726 (RLEVLRMCSCMNLSELPEATERL), and 728–750 (NLRSLDISHCLGLRKLPQEIGKL).

The protein belongs to the disease resistance NB-LRR family.

In terms of biological role, probable disease resistance protein. The protein is Probable disease resistance protein At5g66910 of Arabidopsis thaliana (Mouse-ear cress).